Here is a 528-residue protein sequence, read N- to C-terminus: NAC domain-containing protein 13 (528 aa).

One can recognise an NAC domain in the interval 10–160 (LAPGFRFHPT…AYVLYKIYKK (151 aa)). Residues 107–166 (VGEKKTLVFHRGRAPNGERTNWVMHEYTLHKEELKRCGGEDVKDAYVLYKIYKKSGSGPK) mediate DNA binding. The tract at residues 388-419 (EAPGTGDSSEFLNPVPSGISTTNEDDPSKDES) is disordered. Residues 499-519 (FFCLSIIGALCALFWVIIGTM) traverse the membrane as a helical segment.

As to quaternary structure, interacts with RCD1. As to expression, expressed in roots, rosette leaves, shoot apex, stems and flowers.

It is found in the endoplasmic reticulum membrane. The protein resides in the nucleus. Its function is as follows. Transcriptional activator activated by proteolytic cleavage through regulated intramembrane proteolysis (RIP). Involved in oxidative stress tolerance by mediating regulation of mitochondrial retrograde signaling during mitochondrial dysfunction. Interacts directly with the mitochondrial dysfunction DNA consensus motif 5'-CTTGNNNNNCA[AC]G-3', a cis-regulatory elements of several mitochondrial retrograde regulation-induced genes, and triggers increased oxidative stress tolerance. The polypeptide is NAC domain-containing protein 13 (Arabidopsis thaliana (Mouse-ear cress)).